The chain runs to 368 residues: UPF0284 protein SYNPCC7002_A1742 (368 aa).

The protein belongs to the UPF0284 family.

This is UPF0284 protein SYNPCC7002_A1742 from Picosynechococcus sp. (strain ATCC 27264 / PCC 7002 / PR-6) (Agmenellum quadruplicatum).